Consider the following 244-residue polypeptide: tRNA pseudouridine synthase A 2 (244 aa).

The Nucleophile role is filled by aspartate 52. Tyrosine 110 provides a ligand contact to substrate.

It belongs to the tRNA pseudouridine synthase TruA family. Homodimer.

The enzyme catalyses uridine(38/39/40) in tRNA = pseudouridine(38/39/40) in tRNA. Formation of pseudouridine at positions 38, 39 and 40 in the anticodon stem and loop of transfer RNAs. The chain is tRNA pseudouridine synthase A 2 from Clostridium perfringens (strain 13 / Type A).